The primary structure comprises 557 residues: Myo-inositol transporter 2 (557 aa).

Topologically, residues 1–76 (MDFNNIPLAT…ENGEGFEAEK (76 aa)) are cytoplasmic. Positions 24–69 (EMTTRPSETKKKVPFSEDMREIPSLPNEEEANATDPQANEVADENG) are disordered. Residues 30–44 (SETKKKVPFSEDMRE) show a composition bias toward basic and acidic residues. A helical transmembrane segment spans residues 77-97 (ISSWIWVLSAVAGISGLLFGY). Topologically, residues 98–99 (DT) are extracellular. Residues 100-120 (GVISGALAVLGSDLGHVLSSG) traverse the membrane as a helical segment. Residues 121 to 123 (QKE) are Cytoplasmic-facing. Residues 124–144 (LITSATSFAALISATTSGWLA) traverse the membrane as a helical segment. Residues 145-157 (DWVGRKRLLLCAD) lie on the Extracellular side of the membrane. A helical transmembrane segment spans residues 158-178 (AIFVIGSVIMAASRNVAMMVV). Residues 179–180 (GR) are Cytoplasmic-facing. A helical membrane pass occupies residues 181 to 201 (FIVGYGIGLTSLIVPMYITEL). Residues 202–209 (APARLRGR) are Extracellular-facing. Residues 210-230 (LVIIYVVFITGGQLIAYSLNA) form a helical membrane-spanning segment. The Cytoplasmic segment spans residues 231–240 (AFEHVHQGWR). Residues 241 to 261 (IMFGIGAAPALGQLISLFWTP) form a helical membrane-spanning segment. Residues 262 to 367 (ESPRYLLRHN…IFQSVGFKNS (106 aa)) lie on the Extracellular side of the membrane. A helical transmembrane segment spans residues 368–388 (ISVSIVVGATNFVFTIVAFMF). Topologically, residues 389-396 (IDRIGRRR) are cytoplasmic. A helical transmembrane segment spans residues 397–417 (ILLCTSAVMIAGLALCAIAYH). Topologically, residues 418 to 432 (FLPADTTQNTNSGWQ) are extracellular. The chain crosses the membrane as a helical span at residues 433-453 (YVVLASIIIFLASYASGIGNI). Residues 454–468 (PWQQAELFPMEVRAL) lie on the Cytoplasmic side of the membrane. A helical transmembrane segment spans residues 469–489 (GAGFSTAINWVGNLIISASFL). The Extracellular segment spans residues 490 to 498 (TMMESITPT). Residues 499-519 (GTFALFAGFCFVGLVTSYFTY) form a helical membrane-spanning segment. At 520–557 (PELAGMSIENIHKLLEKGFWQAVKESTKRVRKGRIDEA) the chain is on the cytoplasmic side.

The protein belongs to the major facilitator superfamily. Sugar transporter (TC 2.A.1.1) family.

It is found in the membrane. It catalyses the reaction myo-inositol(out) + H(+)(out) = myo-inositol(in) + H(+)(in). Transporter for myo-inositol. This is Myo-inositol transporter 2 (itr2) from Schizosaccharomyces pombe (strain 972 / ATCC 24843) (Fission yeast).